The sequence spans 277 residues: Diaminopimelate epimerase (277 aa).

Residues N17, Q50, and N68 each coordinate substrate. Catalysis depends on C77, which acts as the Proton donor. Substrate contacts are provided by residues G78–N79, N162, N195, and E213–R214. The Proton acceptor role is filled by C222. Position 223–224 (G223–T224) interacts with substrate.

Belongs to the diaminopimelate epimerase family. As to quaternary structure, homodimer.

The protein resides in the cytoplasm. The enzyme catalyses (2S,6S)-2,6-diaminopimelate = meso-2,6-diaminopimelate. Its pathway is amino-acid biosynthesis; L-lysine biosynthesis via DAP pathway; DL-2,6-diaminopimelate from LL-2,6-diaminopimelate: step 1/1. Functionally, catalyzes the stereoinversion of LL-2,6-diaminopimelate (L,L-DAP) to meso-diaminopimelate (meso-DAP), a precursor of L-lysine and an essential component of the bacterial peptidoglycan. This is Diaminopimelate epimerase from Phenylobacterium zucineum (strain HLK1).